Here is a 1333-residue protein sequence, read N- to C-terminus: snRNA-activating protein complex subunit 4 (1333 aa).

Residues 29–84 are disordered; sequence HFEVSESSLSSDSEADSLPDEDLETAGAPILEEEGSSESSNDEEDPKDKALPEDPE. Acidic residues-rich tracts occupy residues 41–52 and 59–73; these read SEADSLPDEDLE and LEEEGSSESSNDEED. S68 bears the Phosphoserine mark. Residues 84 to 133 are SNAPC5-binding; it reads ETCLQLNMVYQEVIREKLAEVSQLLAQNQEQQEEILFDLSGTKCPKVKDG. In terms of domain architecture, Myb-like 1 spans 250–288; that stretch reads EEALLGNRLDSHDWEKISNINFEGARSAEEIRKFWQSSE. The 55-residue stretch at 289–343 folds into the HTH myb-type 1 domain; that stretch reads HPSISKQEWSTEEVERLKAIAATHGHLEWHLVAEELGTSRSAFQCLQKFQQYNKT. Residues 317 to 341 constitute a DNA-binding region (H-T-H motif); sequence WHLVAEELGTSRSAFQCLQKFQQYN. The Myb-like 2 domain maps to 344–395; it reads LKRKEWTEEEDHMLTQLVQEMRVGNHIPYRKIVYFMEGRDSMQLIYRWTKSL. 2 HTH myb-type domains span residues 396 to 451 and 452 to 503; these read DPSL…HFSL and KKGR…RKKQ. DNA-binding regions (H-T-H motif) lie at residues 424–447 and 476–499; these read WFKIREEVPGRSDAQCRDRYIRRL and WARIASELPHRSGSQCLSKWKILA. Over residues 503 to 515 the composition is skewed to basic residues; it reads QHLQRKRGQRPRH. Disordered stretches follow at residues 503 to 558, 662 to 702, 811 to 842, and 1079 to 1117; these read QHLQ…LEKS, LMKE…QNKQ, NAKNNTGCLPSMTGEQTAKRASHKGRPRLGSC, and LPSPAKTPAFLEQPPASTDTEPKGPQGQEIPPTPGPEKA. Low complexity predominate over residues 516 to 546; the sequence is SSQWSSSGSSSSSSEDYGSSSGSDGSSGSEN. Polar residues-rich tracts occupy residues 672–686 and 811–826; these read LPSSRSGSDPGNNTA and NAKNNTGCLPSMTGEQ. Positions 1131-1247 are SNAPC2-binding; it reads AIVTWLKGCQ…NSIPTTLSPD (117 aa). A phosphoserine mark is found at S1252, S1254, S1301, and S1309. A disordered region spans residues 1282 to 1333; that stretch reads PAAPDPVQSHLVSPGQRAPSPGEVSAPSPLDASDGLDDLNVLRTRRARHSRR. A compositionally biased stretch (basic residues) spans 1324-1333; it reads RTRRARHSRR.

Part of the SNAPc composed of 5 subunits: SNAPC1, SNAPC2, SNAPC3, SNAPC4 and SNAPC5. SNAPC4 interacts with SNAPC1, SNAPC2, SNAPC5, BRF2 and TBP.

The protein resides in the nucleus. Part of the SNAPc complex required for the transcription of both RNA polymerase II and III small-nuclear RNA genes. Binds to the proximal sequence element (PSE), a non-TATA-box basal promoter element common to these 2 types of genes. Recruits TBP and BRF2 to the U6 snRNA TATA box. The chain is snRNA-activating protein complex subunit 4 from Mus musculus (Mouse).